The chain runs to 571 residues: Apolipoprotein N-acyltransferase (571 aa).

The next 6 helical transmembrane spans lie at 13 to 33 (VVLW…IALV), 51 to 68 (LYAA…GLRY), 72 to 92 (LMFL…VLFI), 118 to 138 (LVAA…FTGI), 152 to 172 (MLIQ…IVCV), and 199 to 219 (LVTA…SMNA). The CN hydrolase domain maps to 234–527 (NELTVYEQDI…SDVIYAQPRR (294 aa)). The active-site Proton acceptor is Glu275. Lys380 is an active-site residue. Cys430 acts as the Nucleophile in catalysis. Residues 542–562 (AGLMGAATLCGLAWMTFEWLM) form a helical membrane-spanning segment.

It belongs to the CN hydrolase family. Apolipoprotein N-acyltransferase subfamily.

The protein resides in the cell inner membrane. It catalyses the reaction N-terminal S-1,2-diacyl-sn-glyceryl-L-cysteinyl-[lipoprotein] + a glycerophospholipid = N-acyl-S-1,2-diacyl-sn-glyceryl-L-cysteinyl-[lipoprotein] + a 2-acyl-sn-glycero-3-phospholipid + H(+). It participates in protein modification; lipoprotein biosynthesis (N-acyl transfer). Its function is as follows. Catalyzes the phospholipid dependent N-acylation of the N-terminal cysteine of apolipoprotein, the last step in lipoprotein maturation. The sequence is that of Apolipoprotein N-acyltransferase from Rhodopirellula baltica (strain DSM 10527 / NCIMB 13988 / SH1).